We begin with the raw amino-acid sequence, 269 residues long: 4-chlorobenzoyl coenzyme A dehalogenase (269 aa).

Residues Arg-24 and 62-67 (AGFYLR) each bind substrate. Catalysis depends on His-90, which acts as the Proton acceptor. Gly-114 is a substrate binding site. Asp-145 acts as the Nucleophile in catalysis. Arg-257 provides a ligand contact to substrate.

It belongs to the enoyl-CoA hydratase/isomerase family. As to quaternary structure, homotetramer. Homotetramer, homooctamer and larger multimers. Homotrimer.

It catalyses the reaction 4-chlorobenzoyl-CoA + H2O = 4-hydroxybenzoyl-CoA + chloride + H(+). Its pathway is xenobiotic degradation; 4-chlorobenzoate degradation; 4-hydroxybenzoate from 4-chlorobenzoate: step 2/3. Inactivated by 1 mM Ag(+) and by 5 mM Cu(2+). Partially inhibited by 5 mM Zn(2+), Mn(2+), Co(2+), Fe(2+) and Ni(2+). Unaffected by 10 mM Na(+), K(+) and Li(+) and by 0.5 mM Mg(2+), Mn(2+), Fe(2+), Ca(2+), Co(2+) and Zn(2+). Inhibited by the sulfhydryl blocking agent 5,5'-dithio-bis-(2-nitrobenzoate), SDS and N-bromosuccinimide. Unaffected by sodium azide and EDTA. Inactivated following treatment with diethyl pyrocarbonate; this inactivation is reversible by treatment with hydroxylamine. In terms of biological role, dehalogenates 4-chlorobenzoyl-CoA, 4-iodobenzoyl-CoA and 4-bromobenzoyl-CoA, but not 4-fluorobenzoyl-CoA. Inactive towards crotonyl-CoA, alpha-methylcrotonyl-CoA and beta-methylcrotonyl-CoA. The protein is 4-chlorobenzoyl coenzyme A dehalogenase of Pseudomonas sp. (strain CBS-3).